A 221-amino-acid chain; its full sequence is MKAVCLLSGGMDSSTLAYVAKDMGYHIHALHLNYGQRTEKKELQSATAIARSLSAEEFIPLDLGYFKAFGKSSLTDPAIDVDVFDENRPELPNTYVPFRNANLLSIATSFAESRDADAIFIGVQALDYSGYPDCRPAFIQAFQQVMDLGTADGTHIDLLTPFIGLTKTDILRKGLDLGVPYEHTWSCYQNEEKACGVCGSCHFRQKAFAELGLSDPIPYEE.

7-17 (LSGGMDSSTLA) is an ATP binding site. The Zn(2+) site is built by Cys187, Cys195, Cys198, and Cys201.

This sequence belongs to the QueC family. Requires Zn(2+) as cofactor.

It catalyses the reaction 7-carboxy-7-deazaguanine + NH4(+) + ATP = 7-cyano-7-deazaguanine + ADP + phosphate + H2O + H(+). It functions in the pathway purine metabolism; 7-cyano-7-deazaguanine biosynthesis. Functionally, catalyzes the ATP-dependent conversion of 7-carboxy-7-deazaguanine (CDG) to 7-cyano-7-deazaguanine (preQ(0)). The protein is 7-cyano-7-deazaguanine synthase of Methanosphaerula palustris (strain ATCC BAA-1556 / DSM 19958 / E1-9c).